The following is a 642-amino-acid chain: Threonine--tRNA ligase (642 aa).

Residues 1–61 (MPIITLPDGS…SEDANLEIIT (61 aa)) form the TGS domain. The catalytic stretch occupies residues 243-534 (DHRKIGKALD…ITEEYAGFFP (292 aa)). 3 residues coordinate Zn(2+): Cys334, His385, and His511.

This sequence belongs to the class-II aminoacyl-tRNA synthetase family. Homodimer. The cofactor is Zn(2+).

It localises to the cytoplasm. It catalyses the reaction tRNA(Thr) + L-threonine + ATP = L-threonyl-tRNA(Thr) + AMP + diphosphate + H(+). In terms of biological role, catalyzes the attachment of threonine to tRNA(Thr) in a two-step reaction: L-threonine is first activated by ATP to form Thr-AMP and then transferred to the acceptor end of tRNA(Thr). Also edits incorrectly charged L-seryl-tRNA(Thr). This Histophilus somni (strain 129Pt) (Haemophilus somnus) protein is Threonine--tRNA ligase.